A 271-amino-acid polypeptide reads, in one-letter code: MGQKVNPHGLRVGVIKDWDSRWFATDKKEFGNLLLEDHNIRKFLKKRLYSAGVAKIEIERSANKIKMDLHVAKPGVVIGRAGAGIEALKAELEKMTKKTIIVNIVEVRSTDKNAQLVAENIALAIERRVAFRRAMKQAIQRAMKSGAKGIKVSASGRLGGAEMARTEGYSEGNVPLQTLRADIDYGFAEADTTYGKIGIKVWICNGEVLPTRDGVNPREESRKSDRRDNKRDNRRNDRRGNDRRGNDNRGNYRGQRPQGGSRPQRTENKGN.

Residues 40-108 enclose the KH type-2 domain; it reads IRKFLKKRLY…TIIVNIVEVR (69 aa). The tract at residues 210-271 is disordered; sequence PTRDGVNPRE…RPQRTENKGN (62 aa). Over residues 215–247 the composition is skewed to basic and acidic residues; sequence VNPREESRKSDRRDNKRDNRRNDRRGNDRRGND.

It belongs to the universal ribosomal protein uS3 family. As to quaternary structure, part of the 30S ribosomal subunit. Forms a tight complex with proteins S10 and S14.

Functionally, binds the lower part of the 30S subunit head. Binds mRNA in the 70S ribosome, positioning it for translation. This is Small ribosomal subunit protein uS3 from Clostridioides difficile (strain 630) (Peptoclostridium difficile).